The sequence spans 519 residues: MGLQRFSFFVTLALVARSLAAIGPVASLVVANAPVSPDGFLRDAIVVNGVVPSPLITGKKGDRFQLNVVDTLTNHSMLKSTSIHWHGFFQAGTNWAEGPAFVNQCPIASGHSFLYDFHVPDQAGTFWYHSHLSTQYCDGLRGPFVVYDPKDPHASRYDVDNESTVITLTDWYHTAARLGPKFPLGADATLINGLGRSASTPTAALAVINVQHGKRYRFRLVSISCDPNYTFSIDGHNLTVIEVDGINSQPLLVDSIQIFAAQRYSFVLNANQTVGNYWVRANPNFGTVGFAGGINSAILRYQGAPVAEPTTTQTPSVIPLIETNLHPLARMPVPGSPTPGGVDKALNLAFNFNGTNFFINNATFTPPTVPVLLQILSGAQTAQDLLPAGSVYPLPAHSTIEITLPATALAPGAPHPFHLHGHAFAVVRSAGSTTYNYNDPIFRDVVSTGTPAAGDNVTIRFQTDNPGPWFLHCHIDFHLDAGFAIVFAEDVADVKAANPVPKAWSDLCPIYDGLSEANQ.

The N-terminal stretch at 1–20 (MGLQRFSFFVTLALVARSLA) is a signal peptide. Plastocyanin-like domains are found at residues 22–147 (IGPV…FVVY) and 159–301 (VDNE…ILRY). N74 carries an N-linked (GlcNAc...) asparagine glycan. The Cu cation site is built by H84, H86, H129, and H131. 2 disulfide bridges follow: C105–C508 and C137–C225. Residues N161, N228, N237, N271, N353, and N361 are each glycosylated (N-linked (GlcNAc...) asparagine). Positions 368 to 490 (TVPVLLQILS…AGFAIVFAED (123 aa)) constitute a Plastocyanin-like 3 domain. Cu cation is bound by residues H415, H418, H420, H472, C473, H474, and H478.

It belongs to the multicopper oxidase family. Homodimer. The cofactor is Cu cation.

Its subcellular location is the secreted. The enzyme catalyses 4 hydroquinone + O2 = 4 benzosemiquinone + 2 H2O. Lignin degradation and detoxification of lignin-derived products. This is Laccase-2 from Trametes villosa (White-rot fungus).